A 262-amino-acid polypeptide reads, in one-letter code: 3-methyl-2-oxobutanoate hydroxymethyltransferase (262 aa).

D44 and D83 together coordinate Mg(2+). 3-methyl-2-oxobutanoate contacts are provided by residues 44–45, D83, and K113; that span reads DS. Mg(2+) is bound at residue E115. Catalysis depends on E182, which acts as the Proton acceptor.

This sequence belongs to the PanB family. In terms of assembly, homodecamer; pentamer of dimers. Mg(2+) serves as cofactor.

It localises to the cytoplasm. The enzyme catalyses 3-methyl-2-oxobutanoate + (6R)-5,10-methylene-5,6,7,8-tetrahydrofolate + H2O = 2-dehydropantoate + (6S)-5,6,7,8-tetrahydrofolate. It functions in the pathway cofactor biosynthesis; (R)-pantothenate biosynthesis; (R)-pantoate from 3-methyl-2-oxobutanoate: step 1/2. Its function is as follows. Catalyzes the reversible reaction in which hydroxymethyl group from 5,10-methylenetetrahydrofolate is transferred onto alpha-ketoisovalerate to form ketopantoate. This Picosynechococcus sp. (strain ATCC 27264 / PCC 7002 / PR-6) (Agmenellum quadruplicatum) protein is 3-methyl-2-oxobutanoate hydroxymethyltransferase.